We begin with the raw amino-acid sequence, 187 residues long: UPF0301 protein BCI_0481 (187 aa).

Belongs to the UPF0301 (AlgH) family.

The polypeptide is UPF0301 protein BCI_0481 (Baumannia cicadellinicola subsp. Homalodisca coagulata).